The primary structure comprises 287 residues: Melatonin receptor type 1B-A (287 aa).

The Extracellular segment spans residues 1–28; that stretch reads MPENVSLIRNRTEVGQGRAWGSGAGARP. N-linked (GlcNAc...) asparagine glycosylation is found at Asn4 and Asn10. Residues 29–49 traverse the membrane as a helical segment; it reads AWVVMVLAGVLIFTSVVDVLG. Over 50-69 the chain is Cytoplasmic; the sequence is NVLVIISVLRNRKLRNAGNA. The helical transmembrane segment at 70 to 90 threads the bilayer; it reads FVVSLAFADLLVVCYPYPLVL. Residues 91 to 107 are Extracellular-facing; it reads HAMLHAGWLPGEMECKV. Cys105 and Cys182 are disulfide-bonded. A helical membrane pass occupies residues 108 to 128; it reads SGFLMGASVIGSIFNITAIAI. Residues 129–149 lie on the Cytoplasmic side of the membrane; the sequence is NRYCFICQANTYEKIYGRAGT. Residues 150-170 traverse the membrane as a helical segment; the sequence is LVLLTLVWVLTAIAILPNLSL. At 171–192 the chain is on the extracellular side; that stretch reads GSLTYDPRVYSCTFSQTTSAGY. The helical transmembrane segment at 193 to 213 threads the bilayer; it reads TIAVVTVHFLLPIAVVTFCYL. Residues 214–245 lie on the Cytoplasmic side of the membrane; the sequence is RIWVLVLRVRRRVTTDVRPRLRPSELRHFLTM. The helical transmembrane segment at 246–266 threads the bilayer; it reads FVVFVLFAVCWAPLNLIGLAV. Topologically, residues 267-275 are extracellular; it reads AVDPPRVGP. Residues 276 to 287 form a helical membrane-spanning segment; it reads LVPDWLFVMSYF.

The protein belongs to the G-protein coupled receptor 1 family.

Its subcellular location is the cell membrane. High affinity receptor for melatonin. The activity of this receptor is mediated by pertussis toxin sensitive G proteins that inhibits adenylate cyclase activity. This chain is Melatonin receptor type 1B-A (mtnr1ba), found in Danio rerio (Zebrafish).